The chain runs to 229 residues: UPF0758 protein CLH_0547 (229 aa).

Residues 107–229 (KIMSPNDIAM…FISLKEKGFI (123 aa)) enclose the MPN domain. Zn(2+) is bound by residues His-178, His-180, and Asp-191. Residues 178 to 191 (HNHPSGDPTPSKED) carry the JAMM motif motif.

The protein belongs to the UPF0758 family.

This chain is UPF0758 protein CLH_0547, found in Clostridium botulinum (strain Alaska E43 / Type E3).